The sequence spans 77 residues: U-actitoxin-Avd12a (77 aa).

Positions 1 to 23 are cleaved as a signal peptide; that stretch reads MALFRMLFLCAVLVLLTSKEGMS. Positions 24 to 29 are excised as a propeptide; that stretch reads YEEPEN. The EGF-like domain maps to 31–73; it reads EGVACTGQYAESFCLNGGTCRYIQSIGEYYCICNGDYTGHRCE. 3 disulfide bridges follow: cysteine 35/cysteine 50, cysteine 44/cysteine 61, and cysteine 63/cysteine 72.

This sequence belongs to the EGF domain peptide family.

It is found in the secreted. Its subcellular location is the nematocyst. Has both toxic and EGF activity. Its EGF activity consists of rounding cells (morphological change) and inducing tyrosine phosphorylation of the EGFR in A431 cells, but with a lower potency that human EGF. The protein is U-actitoxin-Avd12a of Anemonia viridis (Snakelocks anemone).